The chain runs to 185 residues: Anterior gradient protein 2 (185 aa).

Positions 1–18 are cleaved as a signal peptide; that stretch reads MQTGLSLACLVLLCSVLG. The tract at residues 25 to 45 is disordered; it reads PKRQAGATDTNGAAKSEPAPV.

It belongs to the AGR family. Expressed in the anterior of the dorsal ectoderm from late gastrula stages onwards. Becomes restricted to the cement gland anlage at the onset of neurulation (stages 13 to 14) and expressed exclusively in the cement gland from stage 18 onwards, with transient expression in the hatching gland during tailbud stages.

The protein resides in the secreted. Functionally, involved in cement gland formation; probably specifies dorsal ectoderm to acquire an anterior fate such as cement gland and forebrain. Signals via the FGF pathway. The protein is Anterior gradient protein 2 (ag2) of Xenopus laevis (African clawed frog).